The following is a 235-amino-acid chain: Large ribosomal subunit protein uL1 (235 aa).

The protein belongs to the universal ribosomal protein uL1 family. Part of the 50S ribosomal subunit.

Binds directly to 23S rRNA. The L1 stalk is quite mobile in the ribosome, and is involved in E site tRNA release. Its function is as follows. Protein L1 is also a translational repressor protein, it controls the translation of the L11 operon by binding to its mRNA. The chain is Large ribosomal subunit protein uL1 from Halothermothrix orenii (strain H 168 / OCM 544 / DSM 9562).